The sequence spans 193 residues: UPF0314 protein Pden_1914 (193 aa).

4 helical membrane-spanning segments follow: residues 13 to 33, 62 to 82, 148 to 168, and 172 to 192; these read APYW…LWIG, WYTP…WLVA, LPVW…TWLI, and LALN…WQAA.

This sequence belongs to the UPF0314 family.

The protein resides in the cell membrane. In Paracoccus denitrificans (strain Pd 1222), this protein is UPF0314 protein Pden_1914.